The sequence spans 57 residues: uncharacterized protein (57 aa).

A disordered region spans residues 1-57 (MDDTLPKQMTPTDTSPLKEEQAHCNNKTLENQPKNINDNKCTDSQNTDLQNTEPSKV). Over residues 23–57 (HCNNKTLENQPKNINDNKCTDSQNTDLQNTEPSKV) the composition is skewed to polar residues.

This is an uncharacterized protein from Ornithodoros (relapsing fever ticks).